The chain runs to 320 residues: tRNA (guanine(10)-N2)-dimethyltransferase (320 aa).

One can recognise a THUMP domain in the interval 46–136; the sequence is EKFFERLAYT…DDKCYVGLLE (91 aa).

The protein belongs to the methyltransferase superfamily. Trm-G10 family. In terms of assembly, monomer.

The protein resides in the cytoplasm. It carries out the reaction guanosine(10) in tRNA + 2 S-adenosyl-L-methionine = N(2)-dimethylguanosine(10) in tRNA + 2 S-adenosyl-L-homocysteine + 2 H(+). Functionally, catalyzes the adenosylmethionine-dependent methylation of the exocyclic amino group (N(2)) of guanosine at position 10 of various tRNAs. Acts via a two-step process that leads to the formation of either N(2)-monomethyl (m(2)G) or N(2)-dimethylguanosine (m(2)(2)G). This chain is tRNA (guanine(10)-N2)-dimethyltransferase (trmG10), found in Archaeoglobus fulgidus (strain ATCC 49558 / DSM 4304 / JCM 9628 / NBRC 100126 / VC-16).